Here is a 101-residue protein sequence, read N- to C-terminus: Large ribosomal subunit protein uL23 (101 aa).

This sequence belongs to the universal ribosomal protein uL23 family. In terms of assembly, part of the 50S ribosomal subunit. Contacts protein L29, and trigger factor when it is bound to the ribosome.

Functionally, one of the early assembly proteins it binds 23S rRNA. One of the proteins that surrounds the polypeptide exit tunnel on the outside of the ribosome. Forms the main docking site for trigger factor binding to the ribosome. The polypeptide is Large ribosomal subunit protein uL23 (Synechocystis sp. (strain ATCC 27184 / PCC 6803 / Kazusa)).